The following is a 370-amino-acid chain: uncharacterized protein (370 aa).

A signal peptide spans 1–27; that stretch reads MSSAANEGCVYLFIVVLRLSSFSCVNS. N-linked (GlcNAc...) asparagine glycans are attached at residues asparagine 59, asparagine 98, and asparagine 126. Disordered stretches follow at residues 81-101 and 123-167; these read SRSH…NTTA and LSEN…CHQP. Acidic residues predominate over residues 139–148; the sequence is HDDDDDDDLE. Asparagine 171, asparagine 221, asparagine 230, and asparagine 262 each carry an N-linked (GlcNAc...) asparagine glycan.

This is an uncharacterized protein from Saccharomyces cerevisiae (strain ATCC 204508 / S288c) (Baker's yeast).